A 614-amino-acid polypeptide reads, in one-letter code: Threonine--tRNA ligase (614 aa).

The interval 1-138 (MRTLMIHSDY…HPLSELSRTI (138 aa)) is editing domain. A disordered region spans residues 133-157 (ELSRTITTEPEEESEDSEEEPSEPS). The segment covering 141 to 154 (EPEEESEDSEEEPS) has biased composition (acidic residues). The segment at 200 to 495 (PHVRLMREKE…TDKGNKPSLP (296 aa)) is catalytic. Residues Cys292, His344, and His466 each coordinate Zn(2+).

It belongs to the class-II aminoacyl-tRNA synthetase family. In terms of assembly, homodimer. Requires Zn(2+) as cofactor.

Its subcellular location is the cytoplasm. The enzyme catalyses tRNA(Thr) + L-threonine + ATP = L-threonyl-tRNA(Thr) + AMP + diphosphate + H(+). Functionally, catalyzes the attachment of threonine to tRNA(Thr) in a two-step reaction: L-threonine is first activated by ATP to form Thr-AMP and then transferred to the acceptor end of tRNA(Thr). Also edits incorrectly charged L-seryl-tRNA(Thr). This chain is Threonine--tRNA ligase, found in Methanosphaera stadtmanae (strain ATCC 43021 / DSM 3091 / JCM 11832 / MCB-3).